We begin with the raw amino-acid sequence, 712 residues long: Matrix metalloproteinase-9 (712 aa).

The N-terminal stretch at 1-19 is a signal peptide; it reads MSPLQPLVLALLVLACCSA. A propeptide spans 20–106 (activation peptide); sequence VPRRRQPTVV…PRCGVPDVGR (87 aa). A glycan (N-linked (GlcNAc...) asparagine) is linked at Asn-38. The short motif at 97–104 is the Cysteine switch element; the sequence is PRCGVPDV. Cys-99 serves as a coordination point for Zn(2+). Asn-120 and Asn-127 each carry an N-linked (GlcNAc...) asparagine glycan. Asp-131 and Asp-165 together coordinate Ca(2+). Residues His-175 and Asp-177 each contribute to the Zn(2+) site. Asp-182, Gly-183, Asn-185, and Leu-187 together coordinate Ca(2+). Residue His-190 coordinates Zn(2+). Ca(2+)-binding residues include Gly-197, Gln-199, and Asp-201. His-203 is a Zn(2+) binding site. Ca(2+) is bound by residues Asp-205, Asp-206, and Glu-208. Fibronectin type-II domains are found at residues 225 to 273, 283 to 331, and 342 to 390; these read AKGA…FCPS, ADGK…FCPT, and AAGE…FCPD. Intrachain disulfides connect Cys-230/Cys-256, Cys-244/Cys-271, Cys-288/Cys-314, Cys-302/Cys-329, Cys-347/Cys-373, and Cys-361/Cys-388. Zn(2+) is bound at residue His-401. The active site involves Glu-402. Zn(2+)-binding residues include His-405 and His-411. The segment at 440–519 is disordered; sequence QHLYGPRPEP…PTESPDPAED (80 aa). Over residues 455–465 the composition is skewed to low complexity; it reads TTTTTTTTEPQ. Pro residues predominate over residues 491–504; that stretch reads TGPPAAGPTGPPTA. Over residues 505 to 514 the composition is skewed to low complexity; that stretch reads GPSAAPTESP. An intrachain disulfide couples Cys-521 to Cys-709. Hemopexin repeat units follow at residues 523 to 568, 569 to 613, 615 to 662, and 663 to 709; these read VDIF…WPAL, PRKL…GLGP, VAQV…FPGV, and PIST…LLKC.

Belongs to the peptidase M10A family. Exists as monomer or homodimer; disulfide-linked. Also exists as heterodimer with LCN2. Macrophages and transformed cell lines produce only the monomeric form. Interacts with ECM1. Requires Zn(2+) as cofactor. Ca(2+) serves as cofactor. N- and O-glycosylated.

It localises to the secreted. The protein resides in the extracellular space. It is found in the extracellular matrix. It carries out the reaction Cleavage of gelatin types I and V and collagen types IV and V.. Its function is as follows. Matrix metalloproteinase that plays an essential role in local proteolysis of the extracellular matrix and in leukocyte migration. Could play a role in bone osteoclastic resorption. Cleaves KiSS1 at a Gly-|-Leu bond. Cleaves NINJ1 to generate the Secreted ninjurin-1 form. Cleaves type IV and type V collagen into large C-terminal three quarter fragments and shorter N-terminal one quarter fragments. Degrades fibronectin but not laminin or Pz-peptide. This Bos taurus (Bovine) protein is Matrix metalloproteinase-9.